The chain runs to 151 residues: Transcriptional repressor NrdR (151 aa).

Residues cysteine 3 to cysteine 34 fold into a zinc finger. The ATP-cone domain occupies isoleucine 49 to threonine 139.

The protein belongs to the NrdR family. Zn(2+) is required as a cofactor.

Negatively regulates transcription of bacterial ribonucleotide reductase nrd genes and operons by binding to NrdR-boxes. In Clostridium acetobutylicum (strain ATCC 824 / DSM 792 / JCM 1419 / IAM 19013 / LMG 5710 / NBRC 13948 / NRRL B-527 / VKM B-1787 / 2291 / W), this protein is Transcriptional repressor NrdR.